Here is a 459-residue protein sequence, read N- to C-terminus: MAYNYNMHTSSRVAIIGAGVSGLAAAKHLARHHPQVFEASDSIGGVWRKCTYETTKLQSVRVSYELSDFLWPNRGESSFPTYVDVLDYLEAYAKHFNLVKFIKFNSKVVELRFIGDGKTLQMGDLGAYGNLLPGKPVWEVAVNTGDGDIQWHAFEYVVVCAGKYGDVPRTPTFPVKKGPEIFKGKVLHSMDYSKLQKEKASQLLHGKKVAVIGFKKSAIDLALESALANQGKEGKTCTMVVRTPHWVIPHYWRATVSKFIESYVLWKLPLEKYGLKPDHAFEEDYASCQMALVPEKFFEEADKGMIRFKRTTNWWFYDEGIEFEDGTTLEADVVILATGYDGMKKLKAIVPEPFRSWLEFPWGIMPLYRGTIHPLIPNMGFIGYVQSSSNLKSSELHSRWLSQLLDGKFTLPSKEKMLDQFLKEMHVMRRSSRFFKNHCFSTFSIQHADDLSKDMNLKP.

FAD is bound by residues 17 to 21 (GAGVS), E38, and 46 to 47 (VW). NADP(+) is bound at residue 217–220 (SAID).

The protein belongs to the FMO family. The cofactor is FAD.

The sequence is that of Putative flavin-containing monooxygenase 2 (FMO2) from Arabidopsis thaliana (Mouse-ear cress).